Here is a 320-residue protein sequence, read N- to C-terminus: Cytochrome f (320 aa).

The first 35 residues, 1–35, serve as a signal peptide directing secretion; the sequence is MQTRNAFSWIKKEITRSISVLLMIYIITRAPISNA. Heme-binding residues include Tyr-36, Cys-56, Cys-59, and His-60. A helical membrane pass occupies residues 286–305; sequence VQGLLLFLASIILAQIFLVL.

The protein belongs to the cytochrome f family. The 4 large subunits of the cytochrome b6-f complex are cytochrome b6, subunit IV (17 kDa polypeptide, petD), cytochrome f and the Rieske protein, while the 4 small subunits are PetG, PetL, PetM and PetN. The complex functions as a dimer. Requires heme as cofactor.

The protein resides in the plastid. Its subcellular location is the chloroplast thylakoid membrane. Component of the cytochrome b6-f complex, which mediates electron transfer between photosystem II (PSII) and photosystem I (PSI), cyclic electron flow around PSI, and state transitions. The protein is Cytochrome f (petA) of Vicia faba (Broad bean).